The chain runs to 159 residues: Neuroglobin (159 aa).

Residues 3-151 (KLSEKDKELI…VVAAMSQGWA (149 aa)) enclose the Globin domain. Positions 66 and 98 each coordinate heme b.

The protein belongs to the globin family. As to quaternary structure, monomer. Homodimers and homotetramers. Mainly monomeric but also detected as part of homodimers and homotetramers.

Its subcellular location is the cytoplasm. It localises to the cytosol. It is found in the mitochondrion matrix. It carries out the reaction Fe(III)-heme b-[protein] + nitric oxide + H2O = Fe(II)-heme b-[protein] + nitrite + 2 H(+). Monomeric globin with a bis-histidyl six-coordinate heme-iron atom through which it can bind dioxygen, carbon monoxide and nitric oxide. Could help transport oxygen and increase its availability to the metabolically active neuronal tissues, though its low quantity in tissues as well as its high affinity for dioxygen, which may limit its oxygen-releasing ability, argue against it. The ferrous/deoxygenated form exhibits a nitrite reductase activity and it could produce nitric oxide which in turn inhibits cellular respiration in response to hypoxia. In its ferrous/deoxygenated state, it may also exhibit GDI (Guanine nucleotide Dissociation Inhibitor) activity toward heterotrimeric G-alpha proteins, thereby regulating signal transduction to facilitate neuroprotective responses in the wake of hypoxia and associated oxidative stress. The sequence is that of Neuroglobin (ngb) from Chaenocephalus aceratus (Blackfin icefish).